The following is a 148-amino-acid chain: Hemoglobin subunit gamma (148 aa).

Positions 3–148 constitute a Globin domain; sequence HFTAEEKAII…VAIAMGHKYH (146 aa). Heme b-binding residues include His-64 and His-93.

It belongs to the globin family. As to quaternary structure, heterotetramer of two alpha chains and two gamma chains in fetal hemoglobin (Hb F). In terms of tissue distribution, red blood cells.

Its function is as follows. Gamma chains make up the fetal hemoglobin F, in combination with alpha chains. The protein is Hemoglobin subunit gamma (HBG) of Carlito syrichta (Philippine tarsier).